Here is a 300-residue protein sequence, read N- to C-terminus: UDP-3-O-acyl-N-acetylglucosamine deacetylase (300 aa).

The Zn(2+) site is built by His-78, His-237, and Asp-241. Residue His-264 is the Proton donor of the active site.

The protein belongs to the LpxC family. The cofactor is Zn(2+).

The enzyme catalyses a UDP-3-O-[(3R)-3-hydroxyacyl]-N-acetyl-alpha-D-glucosamine + H2O = a UDP-3-O-[(3R)-3-hydroxyacyl]-alpha-D-glucosamine + acetate. It participates in glycolipid biosynthesis; lipid IV(A) biosynthesis; lipid IV(A) from (3R)-3-hydroxytetradecanoyl-[acyl-carrier-protein] and UDP-N-acetyl-alpha-D-glucosamine: step 2/6. Functionally, catalyzes the hydrolysis of UDP-3-O-myristoyl-N-acetylglucosamine to form UDP-3-O-myristoylglucosamine and acetate, the committed step in lipid A biosynthesis. The chain is UDP-3-O-acyl-N-acetylglucosamine deacetylase from Acinetobacter baumannii (strain ATCC 17978 / DSM 105126 / CIP 53.77 / LMG 1025 / NCDC KC755 / 5377).